Consider the following 284-residue polypeptide: 4-hydroxybenzoate octaprenyltransferase (284 aa).

9 helical membrane-spanning segments follow: residues 19-39 (IGSL…AQGL), 42-62 (LRVL…GCVI), 93-113 (LLLF…MNTL), 114-134 (TIQL…MKRF), 136-156 (HLPQ…AWAA), 158-178 (ANTL…WTIA), 210-230 (IIGL…QGLA), 233-253 (TSYY…QHLI), and 264-284 (AFLN…LSVW).

This sequence belongs to the UbiA prenyltransferase family. It depends on Mg(2+) as a cofactor.

It localises to the cell inner membrane. The catalysed reaction is all-trans-octaprenyl diphosphate + 4-hydroxybenzoate = 4-hydroxy-3-(all-trans-octaprenyl)benzoate + diphosphate. Its pathway is cofactor biosynthesis; ubiquinone biosynthesis. Catalyzes the prenylation of para-hydroxybenzoate (PHB) with an all-trans polyprenyl group. Mediates the second step in the final reaction sequence of ubiquinone-8 (UQ-8) biosynthesis, which is the condensation of the polyisoprenoid side chain with PHB, generating the first membrane-bound Q intermediate 3-octaprenyl-4-hydroxybenzoate. In Vibrio cholerae serotype O1 (strain ATCC 39541 / Classical Ogawa 395 / O395), this protein is 4-hydroxybenzoate octaprenyltransferase.